The primary structure comprises 130 residues: Small ribosomal subunit protein uS9 (130 aa).

Positions 105–130 (TRDSRMVERKKPGLKKARRASQFSKR) are disordered. The span at 106–115 (RDSRMVERKK) shows a compositional bias: basic and acidic residues. Positions 116 to 130 (PGLKKARRASQFSKR) are enriched in basic residues.

This sequence belongs to the universal ribosomal protein uS9 family.

In Oenococcus oeni (strain ATCC BAA-331 / PSU-1), this protein is Small ribosomal subunit protein uS9.